A 482-amino-acid polypeptide reads, in one-letter code: Histone deacetylase 1 (482 aa).

The histone deacetylase stretch occupies residues 9-321; the sequence is RKVCYYYDGD…WTYETAVALD (313 aa). The 1D-myo-inositol 1,4,5,6-tetrakisphosphate site is built by Gly27 and Lys31. Position 74 is an N6-acetyllysine; alternate (Lys74). Lys74 is covalently cross-linked (Glycyl lysine isopeptide (Lys-Gly) (interchain with G-Cter in SUMO2); alternate). His141 is an active-site residue. Asp176 and His178 together coordinate Zn(2+). An N6-acetyllysine modification is found at Lys220. Cys261 bears the S-nitrosocysteine mark. Asp264 serves as a coordination point for Zn(2+). A 1D-myo-inositol 1,4,5,6-tetrakisphosphate-binding site is contributed by Arg270. S-nitrosocysteine is present on Cys273. Positions 390 to 400 are enriched in acidic residues; the sequence is PEESGDEDEED. A disordered region spans residues 390–482; the sequence is PEESGDEDEE…KGVKEEVKMA (93 aa). Residues Ser393, Ser406, Ser409, Ser421, and Ser423 each carry the phosphoserine modification. Residues 401-416 show a composition bias toward basic and acidic residues; it reads PDKRISICSSDKRIAC. The segment covering 417-427 has biased composition (acidic residues); the sequence is EEEFSDSDEEG. An N6-methylated lysine; by EHMT2 modification is found at Lys432. Residue Lys438 forms a Glycyl lysine isopeptide (Lys-Gly) (interchain with G-Cter in SUMO2) linkage. A compositionally biased stretch (basic and acidic residues) spans 443–482; the sequence is VKTEDEKEKDPEEKKEVTEEEKTKEEKPEAKGVKEEVKMA. Lys444 participates in a covalent cross-link: Glycyl lysine isopeptide (Lys-Gly) (interchain with G-Cter in SUMO2); alternate. A Glycyl lysine isopeptide (Lys-Gly) (interchain with G-Cter in SUMO); alternate cross-link involves residue Lys444. Residues Lys456, Lys457, and Lys473 each participate in a glycyl lysine isopeptide (Lys-Gly) (interchain with G-Cter in SUMO2) cross-link. A Glycyl lysine isopeptide (Lys-Gly) (interchain with G-Cter in SUMO2); alternate cross-link involves residue Lys476. Lys476 participates in a covalent cross-link: Glycyl lysine isopeptide (Lys-Gly) (interchain with G-Cter in SUMO); alternate. Residue Lys480 forms a Glycyl lysine isopeptide (Lys-Gly) (interchain with G-Cter in SUMO2) linkage.

It belongs to the histone deacetylase family. HD type 1 subfamily. Part of the core histone deacetylase (HDAC) complex composed of HDAC1, HDAC2, RBBP4 and RBBP7, the core complex associates with SIN3, SAP18 and SAP30 to form the SIN3 HDAC complex. Component of the nucleosome remodeling and deacetylase (NuRD) repressor complex, composed of core proteins MTA1, MTA2, MTA3, RBBP4, RBBP7, HDAC1, HDAC2, MBD2, MBD3, and peripherally associated proteins CDK2AP1, CDK2AP2, GATAD2A, GATAD2B, CHD3, CHD4 and CHD5. The exact stoichiometry of the NuRD complex is unknown, and some subunits such as MBD2 and MBD3, GATAD2A and GATAD2B, and CHD3, CHD4 and CHD5 define mutually exclusive NuRD complexes. Component of a BHC histone deacetylase complex that contains HDAC1, HDAC2, HMG20B/BRAF35, KDM1A, RCOR1/CoREST and PHF21A/BHC80. The BHC complex may also contain ZMYM2, ZNF217, ZMYM3, GSE1 and GTF2I. Component of a mSin3A corepressor complex that contains SIN3A, SAP130, SUDS3/SAP45, ARID4B/SAP180, HDAC1 and HDAC2. Found in a trimeric complex with APBB1 and TSHZ3; the interaction between HDAC1 and APBB1 is mediated by TSHZ3. Forms a complex comprising APPL1, RUVBL2, APPL2, CTNNB1 and HDAC2. Component of a RCOR/GFI/KDM1A/HDAC complex. Part of a complex composed of TRIM28, HDAC1, HDAC2 and EHMT2. Part of a complex containing at least CDYL, MIER1, MIER2, HDAC1 and HDAC2. The large PER complex involved in the histone deacetylation is composed of at least HDAC1, PER2, SFPQ and SIN3A. Associates with the 9-1-1 complex; interacts with HUS1. Found in a complex with DNMT3A and HDAC7. Found in a complex with YY1, SIN3A and GON4L. Identified in a histone deacetylase complex that contains DNTTIP1, HDAC1 and MIDEAS; this complex assembles into a tetramer that contains four copies of each protein chain. Found in a complex composed of at least SINHCAF, SIN3A, HDAC1, SAP30, RBBP4, OGT and TET1. Component of the SIN3B complex, which includes SIN3B, HDAC1, PHF12 and MORF4L1. Interacts with GFI1; the interaction is direct. Interacts directly with GFI1B. Interacts with TSHZ3 (via N-terminus); the interaction is direct. Interacts with APEX1; the interaction is not dependent on the acetylated status of APEX1. Interacts with BANP. Interacts with BAZ2A/TIP5. Interacts with BCL6. Interacts with BCOR. Interacts with BHLHE40/DEC1. Interacts with BRCC3; this interaction is enhanced in the presence of PWWP2B. Interacts with BRMS1. Interacts with BRMS1L. Interacts with C10orf90/FATS (via its N-terminal); the interaction prevents binding of HDAC1 to CDKN1A/p21 and facilitates the acetylation and stabilization of CDKN1A/p21. Interacts with CBFA2T3. Interacts with CCAR2. Interacts with CDK2AP1. Interacts with CHD3. Interacts with CHD4. Interacts with CHFR. Interacts with CIART. Interacts with CDKN1A/p21. Interacts with CDK5 complexed to CDK5R1 (p25). Interacts with CRY1. Interacts with DAXX. Interacts with DDIT3/CHOP. Interacts with DDX5. Interacts with DHX36; this interaction occurs in a RNA-dependent manner. Interacts with DNMT1. Interacts with DNTTIP1. Interacts with E4F1. Interacts with EP300. Interacts with ERCC6. Interacts with GATAD2A. Interacts with HCFC1. Interacts with HDAC9. Interacts with HUS1. Interacts with INSM1. Interacts with KDM4A. Interacts with KDM5A; this interaction impairs histone deacetylation. Interacts with KDM5B. Interacts with KLF1. Interacts with MBD3L2. Interacts with MIER1. Interacts with NFE4. Interacts with NR4A2/NURR1. Interacts with NR1D2 (via C-terminus). Interacts with NRIP1. Interacts with NSD2. Interacts with PACS2. Interacts with PHB2. Interacts with PPHLN1. Interacts with PRDM6. Interacts with PRDM16. Interacts with PWWP2A in a MTA1-dependent manner. Interacts with PWWP2B. Interacts with RB1. Interacts with RERE. Interacts with SANBR (via the BTB domain). Interacts with SAMSN1. Interacts with SAP30L. Interacts with SETDB1. Interacts with SIN3A. Interacts with SMAD3. Interacts with SMAD4; positively regulated by ZBTB7A. Interacts with SMARCAD1. Interacts with SMARCA4/BRG1. Interacts with SMYD2. Interacts with SMYD4 (via MYND-type zinc finger). Interacts with SP1; the interaction deacetylates SP1 and regulates its transcriptional activity. Interacts with SP3; the interaction deacetylates SP3 and regulates its transcriptional activity. In vitro, C(18) ceramides increase this interaction and the subsequent SP3 deacetylation and SP3-mediated repression of the TERT promoter. Interacts with SPEN/MINT. Interacts with SPHK2. Interacts with SUV39H1. Interacts with TGIF. Interacts with TGIF2. Interacts with TRAF6. Interacts with TRIM28; the interaction recruits HDAC1 to E2F1 and inhibits its acetylation. Interacts with TSC22D3 isoform 1; this interaction affects HDAC1 activity on MYOG promoter and thus inhibits MYOD1 transcriptional activity. Interacts with UHRF1. Interacts with UHRF2. Interacts with ZBTB7A. Interacts with ZMYND8. Interacts with ZMYND15. Interacts with ZNF431. Interacts with ZNF516; this interaction is enhanced in the presence of PWWP2B. Interacts with ZNF541. Interacts with ZNF638. Interacts with ZNHIT1. Interacts with the non-histone region of MACROH2A1. Identified in a complex with HDAC2, KCTD19, DNTTIP1 and ZNF541. Interacts with MSX3. Interacts with VRK1. The cofactor is Zn(2+). Post-translationally, sumoylated on Lys-444 and Lys-476; which promotes enzymatic activity. Desumoylated by SENP1. In terms of processing, phosphorylation on Ser-421 and Ser-423 promotes enzymatic activity and interactions with NuRD and SIN3 complexes. Phosphorylated by CDK5. Ubiquitinated by CHFR and KCTD11, leading to its degradation by the proteasome.

It is found in the nucleus. The catalysed reaction is N(6)-acetyl-L-lysyl-[histone] + H2O = L-lysyl-[histone] + acetate. It carries out the reaction N(6)-acetyl-L-lysyl-[protein] + H2O = L-lysyl-[protein] + acetate. The enzyme catalyses N(6)-(2E)-butenoyl-L-lysyl-[protein] + H2O = (2E)-2-butenoate + L-lysyl-[protein]. It catalyses the reaction N(6)-[(S)-lactoyl]-L-lysyl-[protein] + H2O = (S)-lactate + L-lysyl-[protein]. Inositol tetraphosphate (1D-myo-inositol 1,4,5,6-tetrakisphosphate) may act as an intermolecular glue between HDAC1 and N-Cor repressor complex components. Histone deacetylase that catalyzes the deacetylation of lysine residues on the N-terminal part of the core histones (H2A, H2B, H3 and H4). Histone deacetylation gives a tag for epigenetic repression and plays an important role in transcriptional regulation, cell cycle progression and developmental events. Histone deacetylases act via the formation of large multiprotein complexes. Acts as a component of the histone deacetylase NuRD complex which participates in the remodeling of chromatin. As part of the SIN3B complex is recruited downstream of the constitutively active genes transcriptional start sites through interaction with histones and mitigates histone acetylation and RNA polymerase II progression within transcribed regions contributing to the regulation of transcription. Also functions as a deacetylase for non-histone targets, such as NR1D2, RELA, SP1, SP3, STAT3 and TSHZ3. Deacetylates SP proteins, SP1 and SP3, and regulates their function. Component of the BRG1-RB1-HDAC1 complex, which negatively regulates the CREST-mediated transcription in resting neurons. Upon calcium stimulation, HDAC1 is released from the complex and CREBBP is recruited, which facilitates transcriptional activation. Deacetylates TSHZ3 and regulates its transcriptional repressor activity. Deacetylates 'Lys-310' in RELA and thereby inhibits the transcriptional activity of NF-kappa-B. Deacetylates NR1D2 and abrogates the effect of KAT5-mediated relieving of NR1D2 transcription repression activity. Component of a RCOR/GFI/KDM1A/HDAC complex that suppresses, via histone deacetylase (HDAC) recruitment, a number of genes implicated in multilineage blood cell development. Involved in CIART-mediated transcriptional repression of the circadian transcriptional activator: CLOCK-BMAL1 heterodimer. Required for the transcriptional repression of circadian target genes, such as PER1, mediated by the large PER complex or CRY1 through histone deacetylation. In addition to protein deacetylase activity, also has protein-lysine deacylase activity: acts as a protein decrotonylase and delactylase by mediating decrotonylation ((2E)-butenoyl) and delactylation (lactoyl) of histones, respectively. This Rattus norvegicus (Rat) protein is Histone deacetylase 1 (Hdac1).